The sequence spans 519 residues: Na(+)/H(+) exchange regulatory cofactor NHE-RF3 (519 aa).

PDZ domains are found at residues 9-90 (ECKL…LDGD), 134-215 (RLCY…VDKE), and 243-323 (IVEM…VDKE). Phosphoserine occurs at positions 148, 192, 250, 334, and 348. Positions 347–374 (GSVKEAPAPTPTSLEVSSPPDTTEEVDH) are disordered. The span at 357–367 (PTSLEVSSPPD) shows a compositional bias: polar residues. Positions 378–458 (LCRLAKGENG…NVTLLVCGKK (81 aa)) constitute a PDZ 4 domain. Residue Thr-451 is modified to Phosphothreonine. Positions 473–519 (SLADPPDTPPDSKEGIVVESKHDSHMAKERAHSTASHSSSNSEDTEM) are disordered. Basic and acidic residues predominate over residues 482–504 (PDSKEGIVVESKHDSHMAKERAH). A phosphoserine mark is found at Ser-492, Ser-508, Ser-510, Ser-511, Ser-512, and Ser-514. A compositionally biased stretch (low complexity) spans 505–519 (STASHSSSNSEDTEM).

This sequence belongs to the NHER family. Interacts with PDZK1IP1 and ABCC2. Binds to the C-terminal region of SLC26A3. Interacts (via PDZ domains 1 and 3) with SCARB1 (C-terminal domain). Forms a heterodimeric complex with NHERF1. Interacts with AKAP2, BCR, CFTR, SLCO1A1, SLC22A12, SLC22A4, SLC22A5, NHERF2 and SLC17A1. Component of a complex, composed of PDZK1, SYNGAP1, KLHL17 and NMDA receptors. Interacts (via PDZ1 domain) directly with KLHL17; the interaction is important for integrity of actin cytoskeleton structures in neurons. Interacts (via C-terminal PDZ domain) with SLC26A6 (via C-terminal domain). Interacts (via C-terminal PDZ domain) with SLC9A3 (via C-terminal domain). Interacts (via the first PDZ domain) with PTGIR (via non-isoprenylated C-terminus). Interacts (via PDZ domains 1 and 3) with SLC5A8 (via PDZ-binding motif); interaction increases nicotinate transport activity of SLC5A8.

It is found in the membrane. Its subcellular location is the cell membrane. In terms of biological role, a scaffold protein that connects plasma membrane proteins and regulatory components, regulating their surface expression in epithelial cells apical domains. May be involved in the coordination of a diverse range of regulatory processes for ion transport and second messenger cascades. In complex with NHERF1, may cluster proteins that are functionally dependent in a mutual fashion and modulate the trafficking and the activity of the associated membrane proteins. May play a role in the cellular mechanisms associated with multidrug resistance through its interaction with ABCC2 and PDZK1IP1. May potentiate the CFTR chloride channel activity. Required for normal cell-surface expression of SCARB1. Plays a role in maintaining normal plasma cholesterol levels via its effects on SCARB1. Plays a role in the normal localization and function of the chloride-anion exchanger SLC26A6 to the plasma membrane in the brush border of the proximal tubule of the kidney. May be involved in the regulation of proximal tubular Na(+)-dependent inorganic phosphate cotransport therefore playing an important role in tubule function. The chain is Na(+)/H(+) exchange regulatory cofactor NHE-RF3 (PDZK1) from Pongo abelii (Sumatran orangutan).